Consider the following 729-residue polypeptide: Fatty acid oxidation complex subunit alpha (729 aa).

An enoyl-CoA hydratase/isomerase region spans residues methionine 1–lysine 189. Aspartate 296 serves as a coordination point for substrate. Residues glutamate 311–alanine 729 form a 3-hydroxyacyl-CoA dehydrogenase region. NAD(+) contacts are provided by residues methionine 324, aspartate 343, valine 400 to glutamate 402, lysine 407, and serine 429. Histidine 450 functions as the For 3-hydroxyacyl-CoA dehydrogenase activity in the catalytic mechanism. An NAD(+)-binding site is contributed by asparagine 453. Substrate-binding residues include asparagine 500 and tyrosine 660. Residues arginine 708–alanine 729 form a disordered region.

It in the N-terminal section; belongs to the enoyl-CoA hydratase/isomerase family. In the C-terminal section; belongs to the 3-hydroxyacyl-CoA dehydrogenase family. In terms of assembly, heterotetramer of two alpha chains (FadB) and two beta chains (FadA).

The catalysed reaction is a (3S)-3-hydroxyacyl-CoA + NAD(+) = a 3-oxoacyl-CoA + NADH + H(+). The enzyme catalyses a (3S)-3-hydroxyacyl-CoA = a (2E)-enoyl-CoA + H2O. It carries out the reaction a 4-saturated-(3S)-3-hydroxyacyl-CoA = a (3E)-enoyl-CoA + H2O. It catalyses the reaction (3S)-3-hydroxybutanoyl-CoA = (3R)-3-hydroxybutanoyl-CoA. The catalysed reaction is a (3Z)-enoyl-CoA = a 4-saturated (2E)-enoyl-CoA. The enzyme catalyses a (3E)-enoyl-CoA = a 4-saturated (2E)-enoyl-CoA. It participates in lipid metabolism; fatty acid beta-oxidation. Its function is as follows. Involved in the aerobic and anaerobic degradation of long-chain fatty acids via beta-oxidation cycle. Catalyzes the formation of 3-oxoacyl-CoA from enoyl-CoA via L-3-hydroxyacyl-CoA. It can also use D-3-hydroxyacyl-CoA and cis-3-enoyl-CoA as substrate. This Escherichia coli (strain SMS-3-5 / SECEC) protein is Fatty acid oxidation complex subunit alpha.